We begin with the raw amino-acid sequence, 665 residues long: UvrABC system protein B (665 aa).

The Helicase ATP-binding domain occupies 31–414; the sequence is DGVKGGEKAQ…EMEQTETVVQ (384 aa). 44–51 contributes to the ATP binding site; that stretch reads GATGTGKT. Positions 97–120 match the Beta-hairpin motif; it reads YYDYYQPEAYVPSSDTYIEKDSSI. The region spanning 435 to 601 is the Helicase C-terminal domain; sequence QIDDLVGEIH…TIIKEIRDLI (167 aa). In terms of domain architecture, UVR spans 629 to 664; it reads ADLLMKLEREMKDAAKALDFETAATLRDTILELKAA.

The protein belongs to the UvrB family. Forms a heterotetramer with UvrA during the search for lesions. Interacts with UvrC in an incision complex.

It is found in the cytoplasm. Its function is as follows. The UvrABC repair system catalyzes the recognition and processing of DNA lesions. A damage recognition complex composed of 2 UvrA and 2 UvrB subunits scans DNA for abnormalities. Upon binding of the UvrA(2)B(2) complex to a putative damaged site, the DNA wraps around one UvrB monomer. DNA wrap is dependent on ATP binding by UvrB and probably causes local melting of the DNA helix, facilitating insertion of UvrB beta-hairpin between the DNA strands. Then UvrB probes one DNA strand for the presence of a lesion. If a lesion is found the UvrA subunits dissociate and the UvrB-DNA preincision complex is formed. This complex is subsequently bound by UvrC and the second UvrB is released. If no lesion is found, the DNA wraps around the other UvrB subunit that will check the other stand for damage. This chain is UvrABC system protein B, found in Enterococcus faecalis (strain ATCC 700802 / V583).